We begin with the raw amino-acid sequence, 105 residues long: Replication initiation control protein YabA (105 aa).

Residues H79, C81, C95, and C98 each contribute to the Zn(2+) site.

It belongs to the YabA family. As to quaternary structure, homotetramer. Interacts with both DnaA and DnaN, acting as a bridge between these two proteins. The cofactor is Zn(2+).

It is found in the cytoplasm. The protein localises to the nucleoid. Its function is as follows. Involved in control of chromosome replication initiation. Inhibits the cooperative binding of DnaA to the oriC region, thus negatively regulating initiation of chromosome replication. Inhibits the ability of DnaA-ATP to form a helix on DNA; does not disassemble preformed DnaA-DNA helices. Decreases the residence time of DnaA on the chromosome at its binding sites (oriC, replication forks and promoter-binding sites). Tethers DnaA to the replication machinery via the DNA polymerase beta sliding clamp subunit (dnaN). Associates with oriC and other DnaA targets on the chromosome in a DnaA-dependent manner. This is Replication initiation control protein YabA from Streptococcus sanguinis (strain SK36).